The primary structure comprises 486 residues: Monocarboxylate transporter 12 (486 aa).

Topologically, residues 1-9 are cytoplasmic; sequence MTKITRVGS. 6 helical membrane passes run 10 to 30, 58 to 78, 86 to 106, 115 to 135, 148 to 168, and 177 to 197; these read ASPP…LVTI, AWIH…GSVV, AGIM…SFAT, LGVL…AMVG, IAMS…QLLI, and LLIL…MRPI. Residues 201 to 220 are compositionally biased toward basic and acidic residues; sequence EDPSGPEKSHDRDAQREDCK. A disordered region spans residues 201-221; the sequence is EDPSGPEKSHDRDAQREDCKQ. 6 helical membrane-spanning segments follow: residues 253–273, 289–309, 320–340, 353–373, 383–403, and 410–430; these read FVVL…LFVY, AFLM…FGWL, YVCY…LPML, FGYF…EIVG, VVYF…GWLV, and TAAF…LGFA. The Cytoplasmic segment spans residues 431 to 486; it reads KIAKRMKRTQVPFLVKDSDPKLHLWTNGSVAYSIAKELDQKDEESLAKARTGCNLT.

This sequence belongs to the major facilitator superfamily. Monocarboxylate porter (TC 2.A.1.13) family. In terms of assembly, interacts with isoform 2 of BSG; this interaction is required for its localization to the plasma membrane. As to expression, detected in kidney, choroid plexus, testis, lung, stomach, large and small intestine, spleen, fat and parotid gland. In eye, expressed in cornea, ciliary epithelium, lens epithelium and lens fiber.

Its subcellular location is the cell membrane. It localises to the basolateral cell membrane. It carries out the reaction creatine(in) = creatine(out). It catalyses the reaction guanidinoacetate(in) = guanidinoacetate(out). With respect to regulation, creatine uptake is inhibited by carbonyl cyanide 3-chlorophenylhydrazone (CCCP) and by valinomycin. In terms of biological role, functions as a transporter for creatine and as well for its precursor guanidinoacetate. Transport of creatine and GAA is independent of resting membrane potential and extracellular Na(+), Cl(-), or pH. Contributes to the process of creatine biosynthesis and distribution. The chain is Monocarboxylate transporter 12 from Rattus norvegicus (Rat).